The following is an 88-amino-acid chain: UPF0297 protein GTNG_2488 (88 aa).

It belongs to the UPF0297 family.

The polypeptide is UPF0297 protein GTNG_2488 (Geobacillus thermodenitrificans (strain NG80-2)).